The primary structure comprises 472 residues: 3-isopropylmalate dehydratase large subunit (472 aa).

[4Fe-4S] cluster contacts are provided by C353, C414, and C417.

Belongs to the aconitase/IPM isomerase family. LeuC type 1 subfamily. In terms of assembly, heterodimer of LeuC and LeuD. [4Fe-4S] cluster is required as a cofactor.

The enzyme catalyses (2R,3S)-3-isopropylmalate = (2S)-2-isopropylmalate. It participates in amino-acid biosynthesis; L-leucine biosynthesis; L-leucine from 3-methyl-2-oxobutanoate: step 2/4. Catalyzes the isomerization between 2-isopropylmalate and 3-isopropylmalate, via the formation of 2-isopropylmaleate. The sequence is that of 3-isopropylmalate dehydratase large subunit from Acinetobacter baumannii (strain ATCC 17978 / DSM 105126 / CIP 53.77 / LMG 1025 / NCDC KC755 / 5377).